Reading from the N-terminus, the 273-residue chain is Pantothenate synthetase (273 aa).

27–34 serves as a coordination point for ATP; that stretch reads MGALHEGH. The active-site Proton donor is the His-34. Gln-58 lines the (R)-pantoate pocket. Beta-alanine is bound at residue Gln-58. ATP is bound at residue 144-147; the sequence is GKKD. Gln-150 is a (R)-pantoate binding site. ATP contacts are provided by residues Val-173 and 181 to 184; that span reads LSSR.

The protein belongs to the pantothenate synthetase family. Homodimer.

It is found in the cytoplasm. The enzyme catalyses (R)-pantoate + beta-alanine + ATP = (R)-pantothenate + AMP + diphosphate + H(+). It functions in the pathway cofactor biosynthesis; (R)-pantothenate biosynthesis; (R)-pantothenate from (R)-pantoate and beta-alanine: step 1/1. Catalyzes the condensation of pantoate with beta-alanine in an ATP-dependent reaction via a pantoyl-adenylate intermediate. The protein is Pantothenate synthetase of Sulfurimonas denitrificans (strain ATCC 33889 / DSM 1251) (Thiomicrospira denitrificans (strain ATCC 33889 / DSM 1251)).